Reading from the N-terminus, the 198-residue chain is Ribonuclease HII (198 aa).

Residues 14-198 (GVIAGVDEVG…RNFAPISRAL (185 aa)) enclose the RNase H type-2 domain. A divalent metal cation contacts are provided by Asp20, Glu21, and Asp112.

Belongs to the RNase HII family. The cofactor is Mn(2+). It depends on Mg(2+) as a cofactor.

Its subcellular location is the cytoplasm. It carries out the reaction Endonucleolytic cleavage to 5'-phosphomonoester.. Its function is as follows. Endonuclease that specifically degrades the RNA of RNA-DNA hybrids. This chain is Ribonuclease HII, found in Wolbachia sp. subsp. Drosophila simulans (strain wRi).